The sequence spans 340 residues: Phosphate acyltransferase (340 aa).

Belongs to the PlsX family. As to quaternary structure, homodimer. Probably interacts with PlsY.

The protein localises to the cytoplasm. It catalyses the reaction a fatty acyl-[ACP] + phosphate = an acyl phosphate + holo-[ACP]. It functions in the pathway lipid metabolism; phospholipid metabolism. Its function is as follows. Catalyzes the reversible formation of acyl-phosphate (acyl-PO(4)) from acyl-[acyl-carrier-protein] (acyl-ACP). This enzyme utilizes acyl-ACP as fatty acyl donor, but not acyl-CoA. This is Phosphate acyltransferase from Pseudomonas savastanoi pv. phaseolicola (strain 1448A / Race 6) (Pseudomonas syringae pv. phaseolicola (strain 1448A / Race 6)).